The sequence spans 1097 residues: DNA-directed RNA polymerase subunit beta (1097 aa).

The tract at residues 1070 to 1097 (LMQDVNPRRNTPSRPTYESLGTSEYEED) is disordered. Residues 1077 to 1091 (RRNTPSRPTYESLGT) show a composition bias toward polar residues.

It belongs to the RNA polymerase beta chain family. As to quaternary structure, in cyanobacteria the RNAP catalytic core is composed of 2 alpha, 1 beta, 1 beta', 1 gamma and 1 omega subunit. When a sigma factor is associated with the core the holoenzyme is formed, which can initiate transcription.

The enzyme catalyses RNA(n) + a ribonucleoside 5'-triphosphate = RNA(n+1) + diphosphate. Functionally, DNA-dependent RNA polymerase catalyzes the transcription of DNA into RNA using the four ribonucleoside triphosphates as substrates. This Prochlorococcus marinus (strain MIT 9515) protein is DNA-directed RNA polymerase subunit beta.